Reading from the N-terminus, the 328-residue chain is 4-hydroxy-3-methylbut-2-enyl diphosphate reductase (328 aa).

[4Fe-4S] cluster is bound at residue Cys24. Residues His55 and His88 each contribute to the (2E)-4-hydroxy-3-methylbut-2-enyl diphosphate site. Residues His55 and His88 each coordinate dimethylallyl diphosphate. Isopentenyl diphosphate is bound by residues His55 and His88. Cys110 is a [4Fe-4S] cluster binding site. His138 contributes to the (2E)-4-hydroxy-3-methylbut-2-enyl diphosphate binding site. His138 lines the dimethylallyl diphosphate pocket. Residue His138 coordinates isopentenyl diphosphate. The Proton donor role is filled by Glu140. (2E)-4-hydroxy-3-methylbut-2-enyl diphosphate is bound at residue Thr178. Position 208 (Cys208) interacts with [4Fe-4S] cluster. The (2E)-4-hydroxy-3-methylbut-2-enyl diphosphate site is built by Ser236, Ser237, Asn238, and Ser279. 4 residues coordinate dimethylallyl diphosphate: Ser236, Ser237, Asn238, and Ser279. Isopentenyl diphosphate is bound by residues Ser236, Ser237, Asn238, and Ser279.

The protein belongs to the IspH family. The cofactor is [4Fe-4S] cluster.

It carries out the reaction isopentenyl diphosphate + 2 oxidized [2Fe-2S]-[ferredoxin] + H2O = (2E)-4-hydroxy-3-methylbut-2-enyl diphosphate + 2 reduced [2Fe-2S]-[ferredoxin] + 2 H(+). The catalysed reaction is dimethylallyl diphosphate + 2 oxidized [2Fe-2S]-[ferredoxin] + H2O = (2E)-4-hydroxy-3-methylbut-2-enyl diphosphate + 2 reduced [2Fe-2S]-[ferredoxin] + 2 H(+). Its pathway is isoprenoid biosynthesis; dimethylallyl diphosphate biosynthesis; dimethylallyl diphosphate from (2E)-4-hydroxy-3-methylbutenyl diphosphate: step 1/1. It functions in the pathway isoprenoid biosynthesis; isopentenyl diphosphate biosynthesis via DXP pathway; isopentenyl diphosphate from 1-deoxy-D-xylulose 5-phosphate: step 6/6. In terms of biological role, catalyzes the conversion of 1-hydroxy-2-methyl-2-(E)-butenyl 4-diphosphate (HMBPP) into a mixture of isopentenyl diphosphate (IPP) and dimethylallyl diphosphate (DMAPP). Acts in the terminal step of the DOXP/MEP pathway for isoprenoid precursor biosynthesis. This Ehrlichia ruminantium (strain Welgevonden) protein is 4-hydroxy-3-methylbut-2-enyl diphosphate reductase.